Reading from the N-terminus, the 341-residue chain is Anthranilate phosphoribosyltransferase (341 aa).

Residues Gly-79, 82–83 (GD), Thr-87, 89–92 (NIST), 107–115 (KHGNRAATS), and Ser-119 contribute to the 5-phospho-alpha-D-ribose 1-diphosphate site. Residue Gly-79 coordinates anthranilate. Position 91 (Ser-91) interacts with Mg(2+). Residue Asn-110 coordinates anthranilate. Arg-165 serves as a coordination point for anthranilate. Residues Asp-224 and Glu-225 each contribute to the Mg(2+) site.

Belongs to the anthranilate phosphoribosyltransferase family. Homodimer. Mg(2+) is required as a cofactor.

It carries out the reaction N-(5-phospho-beta-D-ribosyl)anthranilate + diphosphate = 5-phospho-alpha-D-ribose 1-diphosphate + anthranilate. Its pathway is amino-acid biosynthesis; L-tryptophan biosynthesis; L-tryptophan from chorismate: step 2/5. Functionally, catalyzes the transfer of the phosphoribosyl group of 5-phosphorylribose-1-pyrophosphate (PRPP) to anthranilate to yield N-(5'-phosphoribosyl)-anthranilate (PRA). In Symbiobacterium thermophilum (strain DSM 24528 / JCM 14929 / IAM 14863 / T), this protein is Anthranilate phosphoribosyltransferase.